Here is a 365-residue protein sequence, read N- to C-terminus: tRNA/tmRNA (uracil-C(5))-methyltransferase (365 aa).

S-adenosyl-L-methionine contacts are provided by Gln-189, Tyr-217, Asn-222, Glu-238, and Asp-298. The Nucleophile role is filled by Cys-323. Glu-357 (proton acceptor) is an active-site residue.

Belongs to the class I-like SAM-binding methyltransferase superfamily. RNA M5U methyltransferase family. TrmA subfamily.

The enzyme catalyses uridine(54) in tRNA + S-adenosyl-L-methionine = 5-methyluridine(54) in tRNA + S-adenosyl-L-homocysteine + H(+). It carries out the reaction uridine(341) in tmRNA + S-adenosyl-L-methionine = 5-methyluridine(341) in tmRNA + S-adenosyl-L-homocysteine + H(+). Functionally, dual-specificity methyltransferase that catalyzes the formation of 5-methyluridine at position 54 (m5U54) in all tRNAs, and that of position 341 (m5U341) in tmRNA (transfer-mRNA). In Shewanella woodyi (strain ATCC 51908 / MS32), this protein is tRNA/tmRNA (uracil-C(5))-methyltransferase.